The sequence spans 216 residues: Ephrin-A1 (216 aa).

Positions Met1 to Gly28 are cleaved as a signal peptide. One can recognise an Ephrin RBD domain in the interval Glu29–Thr161. Residue Asn36 is glycosylated (N-linked (GlcNAc...) asparagine). Residues Cys61 and Cys102 are joined by a disulfide bond. Positions Thr162 to Glu181 are disordered. Ser195 is lipidated: GPI-anchor amidated serine. A propeptide spans Ala196–Leu216 (removed in mature form).

It belongs to the ephrin family. Binds to the receptor tyrosine kinases EPHA2, EPHA4, EPHA5, EPHA6 and EPHA7. Also binds with low affinity to EPHA1.

The protein resides in the membrane. Functionally, cell surface GPI-bound ligand for Eph receptors, a family of receptor tyrosine kinases which are crucial for migration, repulsion and adhesion during neuronal, vascular and epithelial development. Binds promiscuously Eph receptors residing on adjacent cells, leading to contact-dependent bidirectional signaling into neighboring cells. This is Ephrin-A1 (efna1) from Xenopus laevis (African clawed frog).